Here is a 302-residue protein sequence, read N- to C-terminus: Probable 2-(5''-triphosphoribosyl)-3'-dephosphocoenzyme-A synthase (302 aa).

This sequence belongs to the CitG/MdcB family.

The catalysed reaction is 3'-dephospho-CoA + ATP = 2'-(5''-triphospho-alpha-D-ribosyl)-3'-dephospho-CoA + adenine. This is Probable 2-(5''-triphosphoribosyl)-3'-dephosphocoenzyme-A synthase from Citrobacter koseri (strain ATCC BAA-895 / CDC 4225-83 / SGSC4696).